A 728-amino-acid polypeptide reads, in one-letter code: MSTTSRREPPDLAALLRKKKEEEAAAAKPRFIPKKERERLEAEKKAKEEEERKRKEEAKPQPNGTNHNGNRMDGIQSHHNHNPQRNIPTGPKAMRYDDDRGPNGMSNGRDYRDNRDNRDNRDRNQRGAKRGAPNDDEEKRAKMERNDEAELRARYMGPVVNQSTFSAKKKRRRTAANKFNFDWDADDDTSRPFDPIYAERQEPLVRLGGYEMTEEMVMRKAEAIRRGDPETGEERARQYLEQHRRIKEMEQRKNLGKHWSEKKLEDMKERDWRIFKENFGIATKGGAIPNPMRSWEESTLPRRLLDIVKNVGYDEPTPIQRAAIPIALQARDLIGVAVTGSGKTAAFLLPLLVYISELPPLTEYNKNDGPYALILAPTRELVQQIESEAKKFATPLGFTVVSIVGGHSLEEQAFALRNGAEIIVATPGRLVDCLERRLLVFSQCCYTIMDEADRMIDQGFEEPLTKILDAMPVTNEKPDTDDAENPQLMSRYVDGKDRYRQTMMYTATMPPIVERIAKKYLRRPAIVTIGNAGEAVDTVEQRVEFVSGEDKRKKRLQEILNSGQFKPPIIVFVNIKRNCDMVARDIKGMGYSAVTLHGSKTQEQREAALASLRNGQTDILVATDLAGRGIDVPDVSLVVNFNMATNIESYTHRIGRTGRAGKSGVAITFLGPEDNDVLYDLRQIISKSSISKVPDELRRHEAAQNKPQKGQKKLEESNGYSGKGGSWN.

Residues 19-155 (KKEEEAAAAK…NDEAELRARY (137 aa)) form a disordered region. Composition is skewed to basic and acidic residues over residues 33–59 (PKKE…EEAK), 109–125 (RDYR…DRNQ), and 137–153 (EEKR…ELRA). The Q motif signature appears at 293–321 (RSWEESTLPRRLLDIVKNVGYDEPTPIQR). Residues 324-527 (IPIALQARDL…KKYLRRPAIV (204 aa)) form the Helicase ATP-binding domain. Position 337–344 (337–344 (AVTGSGKT)) interacts with ATP. Positions 450 to 453 (DEAD) match the DEAD box motif. In terms of domain architecture, Helicase C-terminal spans 538 to 701 (TVEQRVEFVS…KVPDELRRHE (164 aa)). Residues 692–728 (KVPDELRRHEAAQNKPQKGQKKLEESNGYSGKGGSWN) are disordered. Residues 693–703 (VPDELRRHEAA) are compositionally biased toward basic and acidic residues.

It belongs to the DEAD box helicase family. DDX23/PRP28 subfamily. Component of the U5 snRNP complex.

The protein resides in the cytoplasm. It is found in the nucleus. The catalysed reaction is ATP + H2O = ADP + phosphate + H(+). Functionally, ATP-dependent RNA helicase involved in mRNA splicing. May destabilize the U1/5'-splice site duplex to permit an effective competition for the 5'-splice site by the U6 snRNA, resulting in the switch between U1 and U6 at the 5'-splice site. May also act to unwind the U4/U6 base-pairing interaction in the U4/U6/U5 snRNP, facilitating the first covalent step of splicing. The polypeptide is Pre-mRNA-splicing ATP-dependent RNA helicase prp-28 (prp-28) (Neurospora crassa (strain ATCC 24698 / 74-OR23-1A / CBS 708.71 / DSM 1257 / FGSC 987)).